Here is a 159-residue protein sequence, read N- to C-terminus: Large ribosomal subunit protein uL10 (159 aa).

The protein belongs to the universal ribosomal protein uL10 family. Part of the ribosomal stalk of the 50S ribosomal subunit. The N-terminus interacts with L11 and the large rRNA to form the base of the stalk. The C-terminus forms an elongated spine to which L12 dimers bind in a sequential fashion forming a multimeric L10(L12)X complex.

Functionally, forms part of the ribosomal stalk, playing a central role in the interaction of the ribosome with GTP-bound translation factors. This is Large ribosomal subunit protein uL10 from Nautilia profundicola (strain ATCC BAA-1463 / DSM 18972 / AmH).